The following is a 108-amino-acid chain: DNA-binding protein HBbu (108 aa).

Belongs to the bacterial histone-like protein family.

Functionally, histone-like DNA-binding protein which is capable of wrapping DNA to stabilize it, and thus to prevent its denaturation under extreme environmental conditions. This is DNA-binding protein HBbu (hbb) from Borrelia turicatae.